The sequence spans 357 residues: DNA integrity scanning protein DisA (357 aa).

The region spanning 8–146 is the DAC domain; that stretch reads VKSMINILQL…GNLRYTLKDI (139 aa). ATP is bound by residues G75, L93, and 106–110; that span reads MRHRT.

Belongs to the DisA family. Homooctamer. It depends on Mg(2+) as a cofactor.

It carries out the reaction 2 ATP = 3',3'-c-di-AMP + 2 diphosphate. Participates in a DNA-damage check-point that is active prior to asymmetric division when DNA is damaged. DisA forms globular foci that rapidly scan along the chromosomes during sporulation, searching for lesions. When a lesion is present, DisA pauses at the lesion site. This triggers a cellular response that culminates in a temporary block in sporulation initiation. Functionally, also has diadenylate cyclase activity, catalyzing the condensation of 2 ATP molecules into cyclic di-AMP (c-di-AMP). c-di-AMP acts as a signaling molecule that couples DNA integrity with progression of sporulation. The rise in c-di-AMP level generated by DisA while scanning the chromosome, operates as a positive signal that advances sporulation; upon encountering a lesion, the DisA focus arrests at the damaged site and halts c-di-AMP synthesis. The polypeptide is DNA integrity scanning protein DisA (Bacillus mycoides (strain KBAB4) (Bacillus weihenstephanensis)).